A 103-amino-acid chain; its full sequence is MYAVVKTGGKQYRVAAGEKLKVEQIPADIGQEITLDQVLSVGEGDQLKVGTPLVAGAVVKATVLAHGRHDKVKIFKMRRRKHYQKRQGHRQNYTEIRIEAITA.

It belongs to the bacterial ribosomal protein bL21 family. As to quaternary structure, part of the 50S ribosomal subunit. Contacts protein L20.

This protein binds to 23S rRNA in the presence of protein L20. The sequence is that of Large ribosomal subunit protein bL21 from Bordetella avium (strain 197N).